Reading from the N-terminus, the 507-residue chain is ATP synthase subunit alpha, chloroplastic (507 aa).

Residue 170–177 (GDRQTGKT) coordinates ATP. Thr-257 is modified (phosphothreonine).

It belongs to the ATPase alpha/beta chains family. In terms of assembly, F-type ATPases have 2 components, CF(1) - the catalytic core - and CF(0) - the membrane proton channel. CF(1) has five subunits: alpha(3), beta(3), gamma(1), delta(1), epsilon(1). CF(0) has four main subunits: a, b, b' and c.

The protein resides in the plastid. Its subcellular location is the chloroplast thylakoid membrane. The catalysed reaction is ATP + H2O + 4 H(+)(in) = ADP + phosphate + 5 H(+)(out). Produces ATP from ADP in the presence of a proton gradient across the membrane. The alpha chain is a regulatory subunit. This chain is ATP synthase subunit alpha, chloroplastic, found in Aethionema cordifolium (Lebanon stonecress).